Reading from the N-terminus, the 66-residue chain is FMRFamide-like neuropeptides 24 (66 aa).

Residues Met-1 to Cys-22 form the signal peptide. Positions Arg-23–His-48 are excised as a propeptide. The residue at position 61 (Phe-61) is a Phenylalanine amide. The propeptide occupies Ser-65–Val-66.

This sequence belongs to the FARP (FMRFamide related peptide) family.

The protein localises to the secreted. Its function is as follows. FMRFamides and FMRFamide-like peptides are neuropeptides. The chain is FMRFamide-like neuropeptides 24 from Caenorhabditis briggsae.